The chain runs to 65 residues: MGKNKDVRITITLECTNCPQNKLKRYPGISRYTTQKNRRNTPNRLELKKFCPHCSLHTLHKEIKK.

The protein belongs to the bacterial ribosomal protein bL33 family.

The protein localises to the plastid. Its subcellular location is the chloroplast. The sequence is that of Large ribosomal subunit protein bL33c from Staurastrum punctulatum (Green alga).